Consider the following 353-residue polypeptide: Thiamine-phosphate synthase (353 aa).

The segment at 1–128 is unknown; the sequence is MESMPVAPST…ARTAAAVRYA (128 aa). The segment at 129-353 is thiamine-phosphate synthase; it reads LYDHEVRILE…ASRQLLDLLT (225 aa). 4-amino-2-methyl-5-(diphosphooxymethyl)pyrimidine contacts are provided by residues 185–189 and Asn217; that span reads QYRRK. Residues Asp218 and Asp237 each coordinate Mg(2+). Ser256 is a 4-amino-2-methyl-5-(diphosphooxymethyl)pyrimidine binding site. 282–284 contributes to the 2-[(2R,5Z)-2-carboxy-4-methylthiazol-5(2H)-ylidene]ethyl phosphate binding site; that stretch reads TAT. Lys285 lines the 4-amino-2-methyl-5-(diphosphooxymethyl)pyrimidine pocket. Residues Gly312 and 332-333 each bind 2-[(2R,5Z)-2-carboxy-4-methylthiazol-5(2H)-ylidene]ethyl phosphate; that span reads VS.

It belongs to the thiamine-phosphate synthase family. Mg(2+) is required as a cofactor.

It catalyses the reaction 2-[(2R,5Z)-2-carboxy-4-methylthiazol-5(2H)-ylidene]ethyl phosphate + 4-amino-2-methyl-5-(diphosphooxymethyl)pyrimidine + 2 H(+) = thiamine phosphate + CO2 + diphosphate. It carries out the reaction 2-(2-carboxy-4-methylthiazol-5-yl)ethyl phosphate + 4-amino-2-methyl-5-(diphosphooxymethyl)pyrimidine + 2 H(+) = thiamine phosphate + CO2 + diphosphate. The enzyme catalyses 4-methyl-5-(2-phosphooxyethyl)-thiazole + 4-amino-2-methyl-5-(diphosphooxymethyl)pyrimidine + H(+) = thiamine phosphate + diphosphate. The protein operates within cofactor biosynthesis; thiamine diphosphate biosynthesis; thiamine phosphate from 4-amino-2-methyl-5-diphosphomethylpyrimidine and 4-methyl-5-(2-phosphoethyl)-thiazole: step 1/1. In terms of biological role, condenses 4-methyl-5-(beta-hydroxyethyl)thiazole monophosphate (THZ-P) and 2-methyl-4-amino-5-hydroxymethyl pyrimidine pyrophosphate (HMP-PP) to form thiamine monophosphate (TMP). In Synechococcus sp. (strain WH7803), this protein is Thiamine-phosphate synthase.